Consider the following 333-residue polypeptide: Pollen allergen KBG 41 (333 aa).

Positions 1-23 are cleaved as a signal peptide; that stretch reads MAVHQYTVALFLAVALVAGPAAS. A run of 2 repeats spans residues 309–320 and 321–332. The interval 309–332 is 2 X 12 AA tandem repeats; that stretch reads TGAATAAAGGYKTGAATPTAGGYK.

It belongs to the Poa p IX/Phl p VI allergen family. As to expression, pollen.

The polypeptide is Pollen allergen KBG 41 (Poa pratensis (Kentucky bluegrass)).